The sequence spans 276 residues: Large ribosomal subunit protein uL2c (276 aa).

The tract at residues 225-276 is disordered; the sequence is AMNPVDHPHGGGEGRTPIGRKKPVTPWGYSALGKKSRKRNRYSDASILRRRE.

This sequence belongs to the universal ribosomal protein uL2 family. Part of the 50S ribosomal subunit.

The protein resides in the plastid. Its subcellular location is the chloroplast. This is Large ribosomal subunit protein uL2c (rpl2) from Pinus koraiensis (Korean pine).